The sequence spans 1032 residues: Baseplate wedge protein gp7 (1032 aa).

The disordered stretch occupies residues 1012–1032 (LKDNIGNPRDPENPTQVKIDE).

It belongs to the T4likevirus baseplate wedge protein gp7 family. In terms of assembly, heterotrimer with gp6; assembles as a (gp6)2-gp7 heterotrimeric molecule. The (gp6)2-gp7 heterotrimeric molecule further interacts with gp25 and gp53. The gp25-(gp6)2-gp7 module is involved in sheath contraction. Interacts with gp8. Binds to gp10 homotrimer; disulfide-linked. Heteromultimer with gp10; a gp10 molecule is disulfide-linked to gp7 and the other two remaining gp10 molecules form a disulfide bond. Part of the baseplate macromolecular complex which consists of gp5, gp5.4, gp27 (central spike complex); gp6, gp25, gp53 (inner baseplate); gp7, gp8 (intermediate baseplate); gp9, gp10, gp11, gp12 (peripheral); gp48 and gp54 (proximal region of the tail tube).

It is found in the virion. In terms of biological role, intermediate/inner baseplate protein. The gp25-(gp6)2-gp7 module is involved in sheath contraction. Involved in the tail assembly. The chain is Baseplate wedge protein gp7 (7) from Enterobacteria phage T4 (Bacteriophage T4).